The chain runs to 227 residues: 7-cyano-7-deazaguanine synthase (227 aa).

9–19 (LSGGLDSATVL) serves as a coordination point for ATP. Zn(2+) is bound by residues C189, C199, C202, and C205.

The protein belongs to the QueC family. Requires Zn(2+) as cofactor.

It carries out the reaction 7-carboxy-7-deazaguanine + NH4(+) + ATP = 7-cyano-7-deazaguanine + ADP + phosphate + H2O + H(+). It participates in purine metabolism; 7-cyano-7-deazaguanine biosynthesis. Functionally, catalyzes the ATP-dependent conversion of 7-carboxy-7-deazaguanine (CDG) to 7-cyano-7-deazaguanine (preQ(0)). The chain is 7-cyano-7-deazaguanine synthase from Cupriavidus taiwanensis (strain DSM 17343 / BCRC 17206 / CCUG 44338 / CIP 107171 / LMG 19424 / R1) (Ralstonia taiwanensis (strain LMG 19424)).